Reading from the N-terminus, the 440-residue chain is Trigger factor (440 aa).

A PPIase FKBP-type domain is found at 162–247 (GDRVTFDFTG…LKKIEKFQLP (86 aa)).

Belongs to the FKBP-type PPIase family. Tig subfamily.

The protein resides in the cytoplasm. It catalyses the reaction [protein]-peptidylproline (omega=180) = [protein]-peptidylproline (omega=0). Its function is as follows. Involved in protein export. Acts as a chaperone by maintaining the newly synthesized protein in an open conformation. Functions as a peptidyl-prolyl cis-trans isomerase. In Hamiltonella defensa subsp. Acyrthosiphon pisum (strain 5AT), this protein is Trigger factor.